Here is a 1040-residue protein sequence, read N- to C-terminus: Multidrug resistance protein MdtB (1040 aa).

The next 12 helical transmembrane spans lie at 16–36, 347–367, 369–389, 396–416, 440–460, 472–492, 537–557, 863–883, 888–908, 911–931, 968–988, and 998–1018; these read FIMR…AGII, LMMA…NIPA, IIPG…MVFL, LTLM…IVVI, IGFT…PLLF, FAIT…TLTP, WLTL…WVFI, LGST…VLGI, FIHP…ALLA, IAGS…IGIV, ILMT…STGV, and IGMV…TPVI.

This sequence belongs to the resistance-nodulation-cell division (RND) (TC 2.A.6) family. MdtB subfamily. As to quaternary structure, part of a tripartite efflux system composed of MdtA, MdtB and MdtC. MdtB forms a heteromultimer with MdtC.

It localises to the cell inner membrane. Its function is as follows. The MdtABC tripartite complex confers resistance against novobiocin and deoxycholate. This chain is Multidrug resistance protein MdtB, found in Escherichia coli O17:K52:H18 (strain UMN026 / ExPEC).